Reading from the N-terminus, the 312-residue chain is Glyoxylate/hydroxypyruvate reductase A (312 aa).

Arginine 227 is an active-site residue. Histidine 275 acts as the Proton donor in catalysis.

Belongs to the D-isomer specific 2-hydroxyacid dehydrogenase family. GhrA subfamily.

It is found in the cytoplasm. It catalyses the reaction glycolate + NADP(+) = glyoxylate + NADPH + H(+). It carries out the reaction (R)-glycerate + NAD(+) = 3-hydroxypyruvate + NADH + H(+). The catalysed reaction is (R)-glycerate + NADP(+) = 3-hydroxypyruvate + NADPH + H(+). Functionally, catalyzes the NADPH-dependent reduction of glyoxylate and hydroxypyruvate into glycolate and glycerate, respectively. The chain is Glyoxylate/hydroxypyruvate reductase A from Shigella boydii serotype 18 (strain CDC 3083-94 / BS512).